Consider the following 226-residue polypeptide: Prolactin (226 aa).

A signal peptide spans 1–29; it reads MNSQGSDRKAVTLLLLVMSNLLFCQNAHP. Cysteines 33 and 38 form a disulfide. 2 positions are modified to phosphoserine: Ser53 and Ser117. Cystine bridges form between Cys85–Cys201 and Cys218–Cys226.

The protein belongs to the somatotropin/prolactin family. In terms of assembly, interacts with PRLR.

It is found in the secreted. Functionally, prolactin acts primarily on the mammary gland by promoting lactation. This chain is Prolactin (PRL), found in Mesocricetus auratus (Golden hamster).